The following is a 185-amino-acid chain: MISVNDFRTGLTIEVDGEIWRVLEFQHVKPGKGAAFVRSKLRNLRTGAIQERTFRAGEKVNRAQIDTRKMQYLYANGDQHVFMDMETYEQIELPAKQIEHELKFLKENMEVFIMMYQGETIGVELPNTVELKVVETEPGIKGDTASGGSKPAKLETGLVVQVPFFVNEGDTLIINTADGTYVSRA.

Belongs to the elongation factor P family.

The protein resides in the cytoplasm. Its pathway is protein biosynthesis; polypeptide chain elongation. Involved in peptide bond synthesis. Stimulates efficient translation and peptide-bond synthesis on native or reconstituted 70S ribosomes in vitro. Probably functions indirectly by altering the affinity of the ribosome for aminoacyl-tRNA, thus increasing their reactivity as acceptors for peptidyl transferase. This chain is Elongation factor P, found in Geobacillus kaustophilus (strain HTA426).